Reading from the N-terminus, the 694-residue chain is Elongation factor G (694 aa).

Residues Glu-8–Thr-287 enclose the tr-type G domain. Residues Ala-17 to Thr-24, Asp-86 to His-90, and Asn-140 to Asp-143 contribute to the GTP site.

This sequence belongs to the TRAFAC class translation factor GTPase superfamily. Classic translation factor GTPase family. EF-G/EF-2 subfamily.

The protein resides in the cytoplasm. Functionally, catalyzes the GTP-dependent ribosomal translocation step during translation elongation. During this step, the ribosome changes from the pre-translocational (PRE) to the post-translocational (POST) state as the newly formed A-site-bound peptidyl-tRNA and P-site-bound deacylated tRNA move to the P and E sites, respectively. Catalyzes the coordinated movement of the two tRNA molecules, the mRNA and conformational changes in the ribosome. The protein is Elongation factor G of Brucella anthropi (strain ATCC 49188 / DSM 6882 / CCUG 24695 / JCM 21032 / LMG 3331 / NBRC 15819 / NCTC 12168 / Alc 37) (Ochrobactrum anthropi).